A 414-amino-acid polypeptide reads, in one-letter code: MSATALSRLNPVSQFGFQRIVAGKSKSFFSNSGQRRLFSDSSRFRQAMAASGSLPVFGDACLDDLVTTCSNGLDFTKKRSSGGSFTINCPVASMRLGKRGGMMKNRLVCHYSVVDPLEKSRALFGTLSKSVHTSPMACFSVGPAHELSSLNGGSQESPPTTTTSLKSLRLVSGSCYLPHPEKEATGGEDAHFICDEEQAIGVADGVGGWAEVGVNAGLFSRELMSYSVSAIQEQHKGSSIDPLVVLEKAHSQTKAKGSSTACIIVLKDKGLHAINLGDSGFTVVREGTTVFQSPVQQHGFNFTYQLESGNSADVPSSGQVFTIDVQSGDVIVAGTDGVYDNLYNEEITGVVVSSVRAGLDPKGTAQKIAELARQRAVDKKRQSPFATAAQEAGYRYYGGKLDDITAVVSYVTSS.

Residues 174–411 (SCYLPHPEKE…DDITAVVSYV (238 aa)) form the PPM-type phosphatase domain. Mn(2+) is bound by residues Asp204, Gly205, Asp336, and Asp402.

It belongs to the PP2C family. Requires Mg(2+) as cofactor. Mn(2+) is required as a cofactor.

The enzyme catalyses O-phospho-L-seryl-[protein] + H2O = L-seryl-[protein] + phosphate. The catalysed reaction is O-phospho-L-threonyl-[protein] + H2O = L-threonyl-[protein] + phosphate. The polypeptide is Probable protein phosphatase 2C 80 (Arabidopsis thaliana (Mouse-ear cress)).